The primary structure comprises 445 residues: 6-phosphogluconate dehydrogenase, decarboxylating (445 aa).

NADP(+)-binding positions include 1–4 (AVMG), 22–24 (NRS), 63–65 (VQA), and asparagine 91. Substrate contacts are provided by residues asparagine 91 and 117-119 (SGG). Lysine 172 (proton acceptor) is an active-site residue. Substrate is bound at residue 175 to 176 (HN). Glutamate 179 (proton donor) is an active-site residue. The substrate site is built by tyrosine 180, lysine 249, arginine 276, arginine 434, and histidine 440.

Belongs to the 6-phosphogluconate dehydrogenase family. Homodimer.

The enzyme catalyses 6-phospho-D-gluconate + NADP(+) = D-ribulose 5-phosphate + CO2 + NADPH. Its pathway is carbohydrate degradation; pentose phosphate pathway; D-ribulose 5-phosphate from D-glucose 6-phosphate (oxidative stage): step 3/3. In terms of biological role, catalyzes the oxidative decarboxylation of 6-phosphogluconate to ribulose 5-phosphate and CO(2), with concomitant reduction of NADP to NADPH. This Pseudescherichia vulneris (Escherichia vulneris) protein is 6-phosphogluconate dehydrogenase, decarboxylating (gnd).